Here is a 192-residue protein sequence, read N- to C-terminus: Erythropoietin (192 aa).

An N-terminal signal peptide occupies residues 1-27 (MGVHECPAWLWLLLSLVSLPLGLPVPG). Disulfide bonds link Cys-34–Cys-187 and Cys-56–Cys-60. Residue Asn-51 is glycosylated (N-linked (GlcNAc...) asparagine). Residues Asn-65 and Asn-110 are each glycosylated (N-linked (GlcNAc...) asparagine). The O-linked (GalNAc...) serine glycan is linked to Ser-152.

The protein belongs to the EPO/TPO family. Produced by kidney or liver of adult mammals and by liver of fetal or neonatal mammals.

It localises to the secreted. In terms of biological role, hormone involved in the regulation of erythrocyte proliferation and differentiation and the maintenance of a physiological level of circulating erythrocyte mass. Binds to EPOR leading to EPOR dimerization and JAK2 activation thereby activating specific downstream effectors, including STAT1 and STAT3. This Macaca fascicularis (Crab-eating macaque) protein is Erythropoietin (EPO).